The chain runs to 170 residues: Small ribosomal subunit protein uS5 (170 aa).

The S5 DRBM domain occupies 12–75 (LSELLVSVRR…NAAKKSMIRV (64 aa)).

This sequence belongs to the universal ribosomal protein uS5 family. In terms of assembly, part of the 30S ribosomal subunit. Contacts proteins S4 and S8.

Functionally, with S4 and S12 plays an important role in translational accuracy. In terms of biological role, located at the back of the 30S subunit body where it stabilizes the conformation of the head with respect to the body. The chain is Small ribosomal subunit protein uS5 from Wolbachia pipientis wMel.